Consider the following 101-residue polypeptide: Large ribosomal subunit protein uL24 (101 aa).

It belongs to the universal ribosomal protein uL24 family. Part of the 50S ribosomal subunit.

In terms of biological role, one of two assembly initiator proteins, it binds directly to the 5'-end of the 23S rRNA, where it nucleates assembly of the 50S subunit. One of the proteins that surrounds the polypeptide exit tunnel on the outside of the subunit. The protein is Large ribosomal subunit protein uL24 of Streptococcus sanguinis (strain SK36).